A 347-amino-acid chain; its full sequence is 4-hydroxy-2-oxovalerate aldolase 1 (347 aa).

The Pyruvate carboxyltransferase domain maps to 13-265 (IRVTDTSLRD…KTGIDFFAIA (253 aa)). 21–22 (RD) contributes to the substrate binding site. D22 contacts Mn(2+). H25 acts as the Proton acceptor in catalysis. The substrate site is built by S175 and H204. Residues H204 and H206 each coordinate Mn(2+). Substrate is bound at residue Y295.

Belongs to the 4-hydroxy-2-oxovalerate aldolase family.

It carries out the reaction (S)-4-hydroxy-2-oxopentanoate = acetaldehyde + pyruvate. This chain is 4-hydroxy-2-oxovalerate aldolase 1, found in Rhodococcus erythropolis (strain PR4 / NBRC 100887).